A 207-amino-acid chain; its full sequence is dITP/XTP pyrophosphatase (207 aa).

A substrate-binding site is contributed by 11–16 (TGNPGK). D72 acts as the Proton acceptor in catalysis. Residue D72 coordinates Mg(2+). Substrate contacts are provided by residues S73, 154–157 (FGYD), K177, and 182–183 (HR).

Belongs to the HAM1 NTPase family. As to quaternary structure, homodimer. The cofactor is Mg(2+).

The enzyme catalyses XTP + H2O = XMP + diphosphate + H(+). It carries out the reaction dITP + H2O = dIMP + diphosphate + H(+). It catalyses the reaction ITP + H2O = IMP + diphosphate + H(+). Functionally, pyrophosphatase that catalyzes the hydrolysis of nucleoside triphosphates to their monophosphate derivatives, with a high preference for the non-canonical purine nucleotides XTP (xanthosine triphosphate), dITP (deoxyinosine triphosphate) and ITP. Seems to function as a house-cleaning enzyme that removes non-canonical purine nucleotides from the nucleotide pool, thus preventing their incorporation into DNA/RNA and avoiding chromosomal lesions. The sequence is that of dITP/XTP pyrophosphatase from Thermus thermophilus (strain ATCC 27634 / DSM 579 / HB8).